The primary structure comprises 236 residues: 2-C-methyl-D-erythritol 4-phosphate cytidylyltransferase (236 aa).

It belongs to the IspD/TarI cytidylyltransferase family. IspD subfamily. Homodimer.

It carries out the reaction 2-C-methyl-D-erythritol 4-phosphate + CTP + H(+) = 4-CDP-2-C-methyl-D-erythritol + diphosphate. Its pathway is isoprenoid biosynthesis; isopentenyl diphosphate biosynthesis via DXP pathway; isopentenyl diphosphate from 1-deoxy-D-xylulose 5-phosphate: step 2/6. Functionally, catalyzes the formation of 4-diphosphocytidyl-2-C-methyl-D-erythritol from CTP and 2-C-methyl-D-erythritol 4-phosphate (MEP). In Salmonella paratyphi B (strain ATCC BAA-1250 / SPB7), this protein is 2-C-methyl-D-erythritol 4-phosphate cytidylyltransferase.